We begin with the raw amino-acid sequence, 332 residues long: ADP-L-glycero-D-manno-heptose-6-epimerase (332 aa).

Residues 10–11 (FI), 31–32 (DD), lysine 38, 74–78 (QGACS), and asparagine 91 contribute to the NADP(+) site. Catalysis depends on tyrosine 138, which acts as the Proton acceptor. NADP(+) is bound at residue lysine 142. Asparagine 167 provides a ligand contact to substrate. NADP(+) contacts are provided by valine 168 and lysine 176. The active-site Proton acceptor is lysine 176. Substrate-binding positions include arginine 178, histidine 185, 199–202 (FSGW), arginine 212, and tyrosine 291.

It belongs to the NAD(P)-dependent epimerase/dehydratase family. HldD subfamily. Homopentamer. NADP(+) serves as cofactor.

It carries out the reaction ADP-D-glycero-beta-D-manno-heptose = ADP-L-glycero-beta-D-manno-heptose. It functions in the pathway nucleotide-sugar biosynthesis; ADP-L-glycero-beta-D-manno-heptose biosynthesis; ADP-L-glycero-beta-D-manno-heptose from D-glycero-beta-D-manno-heptose 7-phosphate: step 4/4. Catalyzes the interconversion between ADP-D-glycero-beta-D-manno-heptose and ADP-L-glycero-beta-D-manno-heptose via an epimerization at carbon 6 of the heptose. The sequence is that of ADP-L-glycero-D-manno-heptose-6-epimerase from Bordetella avium (strain 197N).